A 271-amino-acid polypeptide reads, in one-letter code: Tryptophan synthase alpha chain (271 aa).

Residues Glu49 and Asp60 each act as proton acceptor in the active site.

Belongs to the TrpA family. Tetramer of two alpha and two beta chains.

It carries out the reaction (1S,2R)-1-C-(indol-3-yl)glycerol 3-phosphate + L-serine = D-glyceraldehyde 3-phosphate + L-tryptophan + H2O. It functions in the pathway amino-acid biosynthesis; L-tryptophan biosynthesis; L-tryptophan from chorismate: step 5/5. The alpha subunit is responsible for the aldol cleavage of indoleglycerol phosphate to indole and glyceraldehyde 3-phosphate. This Blochmanniella floridana protein is Tryptophan synthase alpha chain.